Consider the following 855-residue polypeptide: Serine/threonine-protein kinase HAL5 (855 aa).

2 disordered regions span residues 1–166 (MGDE…VERQ) and 214–261 (RRNS…GNGT). Phosphoserine occurs at positions 17 and 19. Polar residues predominate over residues 31-45 (ISGSNNAAAPSSRPG). Low complexity predominate over residues 57–74 (IITSNVSSPSISPVHSPV). S68 and S72 each carry phosphoserine. Residues 94–114 (LSPSREPSLNSENEMFSQESF) show a composition bias toward polar residues. The span at 125-139 (LLEREDLQNKKEEKA) shows a compositional bias: basic and acidic residues. S160 carries the phosphoserine modification. Low complexity predominate over residues 248–258 (GMNSNATNNVG). 8 positions are modified to phosphoserine: S273, S277, S324, S333, S336, S358, S391, and S395. Positions 319–347 (NKNVDSGDEKDADASVNSGDDGDNDSEAN) are disordered. Disordered stretches follow at residues 401–427 (SQTV…DGKN) and 457–497 (LKSE…SHKP). The span at 462–474 (TKGNNGEGRSNSN) shows a compositional bias: polar residues. In terms of domain architecture, Protein kinase spans 503–837 (GKYIGVVGAG…IEQLLQSSWM (335 aa)). ATP contacts are provided by residues 509–517 (VGAGAYGVV) and K546. D688 (proton acceptor) is an active-site residue.

The protein belongs to the protein kinase superfamily. CAMK Ser/Thr protein kinase family. NPR/HAL subfamily. HAL5 sub-subfamily.

The enzyme catalyses L-seryl-[protein] + ATP = O-phospho-L-seryl-[protein] + ADP + H(+). It catalyses the reaction L-threonyl-[protein] + ATP = O-phospho-L-threonyl-[protein] + ADP + H(+). In terms of biological role, protein kinase involved in salt tolerance and pH sensitivity, probably by regulating plasma membrane potential and cation influx. Positively controls the TRK1-TRK2 potassium transport system in response to potassium starvation. Stabilizes TRK1 in the plasma membrane by preventing its vacuolar sorting and degradation. Also stabilizes other plasma membrane nutrient transporters like CAN1, FUR4 and HXT1. May itself be subject to regulation by ARL1. This chain is Serine/threonine-protein kinase HAL5 (HAL5), found in Saccharomyces cerevisiae (strain YJM789) (Baker's yeast).